The chain runs to 622 residues: Serine/threonine-protein kinase MAK (622 aa).

A Protein kinase domain is found at 4–284 (YTTMKQLGDG…ASQALKHPYF (281 aa)). ATP-binding positions include 10-18 (LGDGTYGSV) and Lys-33. The Proton acceptor role is filled by Asp-125. The residue at position 157 (Thr-157) is a Phosphothreonine; by autocatalysis. A Phosphotyrosine; by autocatalysis modification is found at Tyr-159. The tract at residues 301-371 (QTLHKQLQPL…QGHQKPPQTM (71 aa)) is disordered. The segment covering 336–355 (QPKQGHQPLQTIQPPQNTVT) has biased composition (polar residues).

The protein belongs to the protein kinase superfamily. CMGC Ser/Thr protein kinase family. CDC2/CDKX subfamily. As to quaternary structure, interacts with AR and CDK20. Found in a complex containing MAK, AR and NCOA3. Interacts with FZR1 (via WD repeats). Interacts with RP1. The cofactor is Mg(2+). In terms of processing, autophosphorylated. Phosphorylated on serine and threonine residues. As to expression, in pre- and postmeiotic male germ cells in testis. In photoreceptor cells of the retina and in the olfactory receptors, and in certain epithelia of the respiratory tract and choroid plexus (brain).

The protein localises to the nucleus. The protein resides in the cytoplasm. It is found in the cytoskeleton. Its subcellular location is the microtubule organizing center. It localises to the centrosome. The protein localises to the spindle. The protein resides in the midbody. It is found in the cell projection. Its subcellular location is the cilium. It localises to the photoreceptor outer segment. The protein localises to the photoreceptor inner segment. The enzyme catalyses L-seryl-[protein] + ATP = O-phospho-L-seryl-[protein] + ADP + H(+). It carries out the reaction L-threonyl-[protein] + ATP = O-phospho-L-threonyl-[protein] + ADP + H(+). In terms of biological role, essential for the regulation of ciliary length and required for the long-term survival of photoreceptors. Could have an important function in sensory cells and in spermatogenesis. May participate in signaling pathways used in visual and olfactory sensory transduction. Phosphorylates FZR1 in a cell cycle-dependent manner. Plays a role in the transcriptional coactivation of AR. This is Serine/threonine-protein kinase MAK (Mak) from Mus musculus (Mouse).